The chain runs to 281 residues: Ermin (281 aa).

Composition is skewed to polar residues over residues 1–12 (MTDTPETLSGTE), 21–31 (NGQQPSSQTRQ), and 135–147 (AQQQ…DAST). 3 disordered regions span residues 1 to 80 (MTDT…KILN), 110 to 147 (REGH…DAST), and 167 to 248 (KCDE…GDIA). The span at 169–197 (DEEEEEEEEVWNEEINEEDVDECAEEEDE) shows a compositional bias: acidic residues. Positions 198–223 (VRVIEFKRKHREGSPLKEESLAREDS) are enriched in basic and acidic residues. Phosphoserine occurs at positions 211, 223, 227, and 230. T234 carries the post-translational modification Phosphothreonine. Residues 262 to 281 (KIRKGNTKQRIDEFESMMHL) form a binds actin region.

Binds actin. Brain and spinal cord. Exclusively expressed by the oligodendrocytes. Appears at a late stage during myelination, and in the mature nerves, it is localized to the outer cytoplasmic lip of the myelin sheath and the paranodal loops.

The protein localises to the cytoplasm. The protein resides in the cytoskeleton. Plays a role in cytoskeletal rearrangements during the late wrapping and/or compaction phases of myelinogenesis as well as in maintenance and stability of myelin sheath in the adult. May play an important role in late-stage oligodendroglia maturation, myelin/Ranvier node formation during CNS development, and in the maintenance and plasticity of related structures in the mature CNS. This Mus musculus (Mouse) protein is Ermin (Ermn).